We begin with the raw amino-acid sequence, 91 residues long: Mercuric transport protein periplasmic component (91 aa).

The N-terminal stretch at 1 to 19 is a signal peptide; sequence MKKLFASLAIAAVVAPVWA. In terms of domain architecture, HMA spans 22-88; the sequence is QTVTLSVPGM…ATEDAGYPSS (67 aa). The Hg(2+) site is built by Cys33 and Cys36.

This sequence belongs to the MerP family. Monomer.

It is found in the periplasm. In terms of biological role, involved in mercury resistance. Acts as a mercury scavenger that specifically binds to a mercuric ion in the periplasm and probably passes it to the cytoplasmic mercuric reductase MerA via the mercuric transport protein MerT. The sequence is that of Mercuric transport protein periplasmic component from Serratia marcescens.